Reading from the N-terminus, the 467-residue chain is tRNA-2-methylthio-N(6)-dimethylallyladenosine synthase (467 aa).

The tract at residues 1–20 is disordered; it reads MSDDTTQIEPAMAQETSPRA. The MTTase N-terminal domain occupies 23-143; the sequence is RKVFVKTYGC…LPNALARVRG (121 aa). [4Fe-4S] cluster-binding residues include cysteine 32, cysteine 68, cysteine 106, cysteine 184, cysteine 188, and cysteine 191. Positions 170–402 constitute a Radical SAM core domain; it reads RKRGVSAFLT…QALLSAQQYA (233 aa). Residues 405 to 467 enclose the TRAM domain; sequence DSMIGRKMDV…TNSLIAQKLA (63 aa).

The protein belongs to the methylthiotransferase family. MiaB subfamily. As to quaternary structure, monomer. [4Fe-4S] cluster is required as a cofactor.

The protein resides in the cytoplasm. It carries out the reaction N(6)-dimethylallyladenosine(37) in tRNA + (sulfur carrier)-SH + AH2 + 2 S-adenosyl-L-methionine = 2-methylsulfanyl-N(6)-dimethylallyladenosine(37) in tRNA + (sulfur carrier)-H + 5'-deoxyadenosine + L-methionine + A + S-adenosyl-L-homocysteine + 2 H(+). Catalyzes the methylthiolation of N6-(dimethylallyl)adenosine (i(6)A), leading to the formation of 2-methylthio-N6-(dimethylallyl)adenosine (ms(2)i(6)A) at position 37 in tRNAs that read codons beginning with uridine. The sequence is that of tRNA-2-methylthio-N(6)-dimethylallyladenosine synthase from Brucella abortus (strain S19).